The following is a 305-amino-acid chain: Deoxyribonuclease gamma (305 aa).

The first 20 residues, 1–20 (MSRELAPLLLLLLSIHSALA), serve as a signal peptide directing secretion. Residues 35–51 (KQEDKNAMDVIVKVIKR) carry the Bipartite nuclear localization signal motif. Residues E100 and H155 contribute to the active site. Residues C194 and C231 are joined by a disulfide bond. The tract at residues 284–305 (SRAFTNSKKSVTLRKKTKSKRS) is not required for free DNA-nuclease activity but required for activity towards liposome-coated DNA. The Nuclear localization signal signature appears at 296–304 (LRKKTKSKR).

The protein belongs to the DNase I family. It depends on Ca(2+) as a cofactor. The cofactor is Mg(2+). In terms of processing, poly-ADP-ribosylated by PARP1. ADP-ribosylation negatively regulates enzymatic activity during apoptosis. As to expression, liver and spleen.

It localises to the nucleus. Its subcellular location is the endoplasmic reticulum. The protein resides in the secreted. Its activity is regulated as follows. Inhibited by zinc. In terms of biological role, has DNA hydrolytic activity. Is capable of both single- and double-stranded DNA cleavage, producing DNA fragments with 3'-OH ends. Can cleave chromatin to nucleosomal units and cleaves nucleosomal and liposome-coated DNA. Acts in internucleosomal DNA fragmentation (INDF) during apoptosis and necrosis. The role in apoptosis includes myogenic and neuronal differentiation, and BCR-mediated clonal deletion of self-reactive B cells. Is active on chromatin in apoptotic cell-derived membrane-coated microparticles and thus suppresses anti-DNA autoimmunity. Together with DNASE1, plays a key role in degrading neutrophil extracellular traps (NETs). NETs are mainly composed of DNA fibers and are released by neutrophils to bind pathogens during inflammation. Degradation of intravascular NETs by DNASE1 and DNASE1L3 is required to prevent formation of clots that obstruct blood vessels and cause organ damage following inflammation. The chain is Deoxyribonuclease gamma from Homo sapiens (Human).